The primary structure comprises 573 residues: Solute carrier family 41 member 2 (573 aa).

Topologically, residues 1–162 (MTNSKGRSIT…KESSGIMALQ (162 aa)) are extracellular. Phosphoserine occurs at positions 136 and 137. The chain crosses the membrane as a helical span at residues 163-183 (ILVPFLLAGFGTVSAGMVLDI). The Cytoplasmic segment spans residues 184 to 195 (VQHWEVFRKVTE). A helical transmembrane segment spans residues 196-216 (VFILVPALLGLKGNLEMTLAS). Residues 217 to 245 (RLSTAVNIGKMDSPIEKWNLIIGNLALKQ) lie on the Extracellular side of the membrane. A helical transmembrane segment spans residues 246-266 (VQATVVGFLAAVAAIILGWIP). Topologically, residues 267 to 282 (EGKYYLDHSILLCSSS) are cytoplasmic. A helical transmembrane segment spans residues 283–303 (VATAFIASLLQGIIMVGVIVG). The Extracellular segment spans residues 304-313 (SKKTGINPDN). The chain crosses the membrane as a helical span at residues 314–334 (VATPIAASFGDLITLAILAWI). Residues 335-347 (SQGLYSCLETYYY) lie on the Cytoplasmic side of the membrane. A helical membrane pass occupies residues 348–368 (ISPLVGVFFLALTPIWIIIAA). Over 369-376 (KHPATRTV) the chain is Extracellular. A helical membrane pass occupies residues 377–397 (LHSGWEPVITAMVISSIGGLI). Topologically, residues 398–406 (LDTTVSDPN) are cytoplasmic. Residues 407-427 (LVGIVVYTPVINGIGGNLVAI) form a helical membrane-spanning segment. The Extracellular portion of the chain corresponds to 428-469 (QASRISTYLHLHSIPGELPDEPKGCYYPFRTFFGPGVNNKSA). A helical membrane pass occupies residues 470–490 (QVLLLLVIPGHLIFLYTIHLM). Topologically, residues 491–498 (KSGHTSLT) are cytoplasmic. The helical transmembrane segment at 499–519 (IIFIVVYLFGAVLQVFTLLWI) threads the bilayer. Residues 520–543 (ADWMVHHFWRKGKDPDSFSIPYLT) lie on the Extracellular side of the membrane. A helical transmembrane segment spans residues 544–564 (ALGDLLGTALLALSFHFLWLI). Over 565–573 (GDRDGDVGD) the chain is Cytoplasmic.

Belongs to the SLC41A transporter family.

It is found in the cell membrane. The enzyme catalyses Mg(2+)(in) = Mg(2+)(out). It catalyses the reaction Mn(2+)(in) = Mn(2+)(out). The catalysed reaction is Co(2+)(in) = Co(2+)(out). It carries out the reaction Ni(2+)(in) = Ni(2+)(out). The enzyme catalyses Fe(2+)(in) = Fe(2+)(out). Its function is as follows. Acts as a plasma-membrane magnesium transporter. Can also mediate the transport of other divalent metal cations in an order of Ba(2+) &gt; Ni(2+) &gt; Co(2+) &gt; Fe(2+) &gt; Mn(2+). The protein is Solute carrier family 41 member 2 (SLC41A2) of Homo sapiens (Human).